The chain runs to 96 residues: Co-chaperonin GroES (96 aa).

The segment at 26-48 is disordered; that stretch reads LLPGSAQEKPSQGEVLATGNGQI.

This sequence belongs to the GroES chaperonin family. In terms of assembly, heptamer of 7 subunits arranged in a ring. Interacts with the chaperonin GroEL.

It is found in the cytoplasm. Its function is as follows. Together with the chaperonin GroEL, plays an essential role in assisting protein folding. The GroEL-GroES system forms a nano-cage that allows encapsulation of the non-native substrate proteins and provides a physical environment optimized to promote and accelerate protein folding. GroES binds to the apical surface of the GroEL ring, thereby capping the opening of the GroEL channel. The polypeptide is Co-chaperonin GroES (Psychrobacter arcticus (strain DSM 17307 / VKM B-2377 / 273-4)).